We begin with the raw amino-acid sequence, 113 residues long: UPF0482 protein YnfB (113 aa).

An N-terminal signal peptide occupies residues 1–28 (MNILSGKLPFLLGAVFAGSVVLATSVQA).

It belongs to the UPF0482 family.

In Escherichia fergusonii (strain ATCC 35469 / DSM 13698 / CCUG 18766 / IAM 14443 / JCM 21226 / LMG 7866 / NBRC 102419 / NCTC 12128 / CDC 0568-73), this protein is UPF0482 protein YnfB.